A 607-amino-acid chain; its full sequence is MCGIIGIIGNDEVAPRLVDALKRLEYRGYDSAGIATLQNGRLDRRRAEGKLVNLEKRLAGEPLPGVIGIGHTRWATHGRPVEHNAHPHITTRLAVVHNGIIENFAELRAMLEAEGRKFETETDTEAVAHLVTRELEKGKSPVEAVRDCLPHLKGAFALAFLFEGDEELLIGARQGPPLAVGYGEGEMFLGSDAIALAPFTDTISYLEDGDWAVLTRNGVSIYDENNKPVERPVQKSQNTNMLVSKGNHRHFMQKEMFEQPEVISHTLANYLDFTTGKVRKEAIGIDFSKVDRLTITACGTAYYAATVAKYWFEQIARLPVDSDIASEFRYREMPLSKDSLAMFVSQSGETADTLASLRYCKAQGLKIASVLNVTGSTIARESDAVFPTLAGPEIGVASTKAFTCQLSAMASLAIAAARARGAIDEVREQELVHQLSEAPRFINQVLKLEDQIAVVCHDLSKVNHVLYLGRGTSFPLAMEGALKLKEISYIHAEGYAAGELKHGPIALIDETMPVIVIAPSDRLYEKTVSNMQEVAARGGRIILITDKKGAESASIDTMATIVLPEVPEFISPLVYALPIQMLAYHTAVLMGTDVDQPRNLAKSVTVE.

The Nucleophile; for GATase activity role is filled by Cys2. One can recognise a Glutamine amidotransferase type-2 domain in the interval 2–217 (CGIIGIIGND…DGDWAVLTRN (216 aa)). SIS domains follow at residues 283–422 (IGID…ARGA) and 455–597 (VCHD…VDQP). The active-site For Fru-6P isomerization activity is Lys602.

Homodimer.

It localises to the cytoplasm. The catalysed reaction is D-fructose 6-phosphate + L-glutamine = D-glucosamine 6-phosphate + L-glutamate. Catalyzes the first step in hexosamine metabolism, converting fructose-6P into glucosamine-6P using glutamine as a nitrogen source. The polypeptide is Glutamine--fructose-6-phosphate aminotransferase [isomerizing] (Brucella melitensis biotype 1 (strain ATCC 23456 / CCUG 17765 / NCTC 10094 / 16M)).